The chain runs to 417 residues: Phosphoglycerate kinase 1 (417 aa).

Ser-2 is subject to N-acetylserine. Phosphoserine is present on residues Ser-2 and Ser-4. Lys-6 is subject to N6-succinyllysine. Residue Lys-11 is modified to N6-acetyllysine. (2R)-3-phosphoglycerate is bound by residues Val-23, Asp-24, Phe-25, Asn-26, Gln-38, and Arg-39. A mitochondrial targeting region exposed following cis-trans isomerization by PIN1 and recognized by the TOM complex for mitochondrial translocation of the protein region spans residues 38–43; it reads QRIKAA. Position 48 is an N6-acetyllysine; alternate (Lys-48). Residue Lys-48 is modified to N6-succinyllysine; alternate. Ser-62, His-63, Gly-65, and Arg-66 together coordinate (2R)-3-phosphoglycerate. Lys-75 carries the N6-acetyllysine modification. Tyr-76 carries the phosphotyrosine modification. N6-acetyllysine is present on residues Lys-86 and Lys-91. N6-acetyllysine; alternate is present on Lys-97. Lys-97 bears the N6-(2-hydroxyisobutyryl)lysine; alternate mark. (2R)-3-phosphoglycerate is bound by residues Leu-122 and Arg-123. N6-acetyllysine; alternate is present on Lys-131. Residue Lys-131 is modified to N6-malonyllysine; alternate. At Lys-146 the chain carries N6-acetyllysine. (2R)-3-phosphoglycerate is bound by residues His-170 and Arg-171. Lys-191 is modified (N6-succinyllysine). A Phosphotyrosine modification is found at Tyr-196. Residue Lys-199 is modified to N6-acetyllysine. A Phosphoserine modification is found at Ser-203. Gly-214 is a binding site for ADP. Position 214 (Gly-214) interacts with CDP. Residues Ala-215 and Lys-216 each coordinate AMP. Ala-215 is a binding site for ATP. Ala-215 provides a ligand contact to Mg(2+). N6-(2-hydroxyisobutyryl)lysine is present on Lys-216. Mg(2+) contacts are provided by Ala-218 and Asp-219. Position 219 (Asp-219) interacts with CDP. Position 220 (Lys-220) interacts with AMP. Residue Lys-220 coordinates ATP. N6-(2-hydroxyisobutyryl)lysine is present on Lys-220. Gly-238 is an ADP binding site. Gly-238 is a CDP binding site. AMP is bound at residue Gly-239. An ATP-binding site is contributed by Gly-239. 2 positions are modified to N6-acetyllysine: Lys-267 and Lys-291. Residue Gly-313 participates in AMP binding. Gly-313 provides a ligand contact to ATP. Position 323 is an N6-(2-hydroxyisobutyryl)lysine (Lys-323). Residues Gly-338, Val-340, and Phe-343 each contribute to the CDP site. ADP is bound at residue Phe-343. An AMP-binding site is contributed by Glu-344. Residue Glu-344 coordinates ATP. Position 354 is a phosphoserine (Ser-354). Lys-361 carries the post-translational modification N6-acetyllysine. ATP-binding residues include Asp-375 and Thr-376. Residue Asp-375 coordinates Mg(2+).

Belongs to the phosphoglycerate kinase family. As to quaternary structure, monomer. Interacts with kinase MAPK1/ERK2; the interaction is direct, occurs under hypoxic conditions, and promotes its interaction with PIN1. Interacts with peptidyl-prolyl cis-trans isomerase PIN1; the interaction is direct, occurs under hypoxic conditions, and targets the protein to the mitochondrion by promoting interactions with the TOM complex. Interacts with mitochondrial circRNA mcPGK1 (via its 2nd stem-loop); the interaction is direct and targets the protein to the mitochondrion by promoting interactions with the TOM complex. Interacts with pyruvate dehydrogenase kinase PDK1; the interaction is direct, occurs under hypoxic conditions and leads to PDK1-mediated inhibition of pyruvate dehydrogenase complex activity. The cofactor is Mg(2+). Post-translationally, phosphorylated at Ser-203 by MAPK1/ERK2 under hypoxic conditions, which promotes its mitochondrial targeting.

Its subcellular location is the cytoplasm. The protein localises to the cytosol. It localises to the mitochondrion matrix. The catalysed reaction is (2R)-3-phosphoglycerate + ATP = (2R)-3-phospho-glyceroyl phosphate + ADP. The enzyme catalyses L-seryl-[protein] + ATP = O-phospho-L-seryl-[protein] + ADP + H(+). It participates in carbohydrate degradation; glycolysis; pyruvate from D-glyceraldehyde 3-phosphate: step 2/5. Its function is as follows. Catalyzes one of the two ATP producing reactions in the glycolytic pathway via the reversible conversion of 1,3-diphosphoglycerate to 3-phosphoglycerate. Both L- and D- forms of purine and pyrimidine nucleotides can be used as substrates, but the activity is much lower on pyrimidines. In addition to its role as a glycolytic enzyme, it seems that PGK-1 acts as a polymerase alpha cofactor protein (primer recognition protein). Acts as a protein kinase when localized to the mitochondrion where it phosphorylates pyruvate dehydrogenase kinase PDK1 to inhibit pyruvate dehydrogenase complex activity and suppress the formation of acetyl-coenzyme A from pyruvate, and consequently inhibit oxidative phosphorylation and promote glycolysis. May play a role in sperm motility. This chain is Phosphoglycerate kinase 1 (Pgk1), found in Rattus norvegicus (Rat).